The primary structure comprises 801 residues: Na(+)/H(+) antiporter subunit A1 (801 aa).

The next 21 membrane-spanning stretches (helical) occupy residues 4–25, 30–49, 79–101, 108–127, 131–153, 166–188, 208–230, 243–265, 270–289, 302–324, 339–361, 373–395, 429–451, 472–494, 526–548, 589–611, 621–641, 646–668, 672–694, 707–729, and 767–784; these read LHIAVILPLIFALIIPILYRFF, LGWFVLPVPIVIFIYMLTLI, LGLLFSLLISGIGSLVVLYSIGY, LGNFYCYLLLFMGAMLGVVL, VIILYLFWELTSFSSFLLISFWR, LIITVFGGLSLLGGIILLAIPTQ, FIFAMILIMIGAFTKSAQFPFYI, SAYLHSATMVKAGLYLIARMTPI, QGWIWTVTLVGLITLFWASL, AFSTVSQLGMIMAMLGIGAISYH, AAIFHLINHATFKGALFMITGAV, LGGLLTIMPISFTITVITALSMA, YLFPIIGIVGSVFTFVYSIKFIM, ILMLLSPAILATLVIVFGLFPGI, AFLSTLVIYILGILLIVTFSYWV, NNLVIIFGALILLTFVTVFSVPF, IRIFEVCIVILLLSAAFLILF, LFSIIMLSAVGYAVSVLFIFFKA, ALTQFVVESISTALFLLCFYHLP, LTNALIAGGVGLSVIIIGLIAYG, and LFESSVLGIAGLAVYTMI.

Belongs to the CPA3 antiporters (TC 2.A.63) subunit A family. In terms of assembly, may form a heterooligomeric complex that consists of seven subunits: mnhA1, mnhB1, mnhC1, mnhD1, mnhE1, mnhF1 and mnhG1.

It localises to the cell membrane. With respect to regulation, na(+) extrusion is completely inhibited by the H(+) conductor carbonyl cyanide m-chlorophenylhydrazone (CCCP). In terms of biological role, mnh complex is a Na(+)/H(+) antiporter involved in Na(+) excretion. This Staphylococcus aureus (strain MRSA252) protein is Na(+)/H(+) antiporter subunit A1 (mnhA1).